The following is a 38-amino-acid chain: Mu-hexatoxin-Mg1b (38 aa).

Disulfide bonds link C1-C15, C8-C20, and C14-C34. S38 is subject to Serine amide.

This sequence belongs to the neurotoxin 14 (magi-1) family. 09 (magi-1) subfamily. In terms of tissue distribution, expressed by the venom gland.

It is found in the secreted. In terms of biological role, insecticidal neurotoxin. Shows competition for site 3 of insect voltage-gated sodium channels (Nav). This chain is Mu-hexatoxin-Mg1b, found in Macrothele gigas (Japanese funnel web spider).